The following is a 172-amino-acid chain: Small integral membrane protein 23 (172 aa).

The Cytoplasmic segment spans residues 1 to 36 (MATQQVDSRRQVAAEQVAAQLLERRRGSHCDDEKQT). The helical; Signal-anchor for type II membrane protein transmembrane segment at 37–53 (LLALLILVLYLSTEIWG) threads the bilayer. Residues 54–172 (SSWEVSERIR…LEISLSGAEL (119 aa)) are Extracellular-facing. Positions 96-128 (LKEKLHVFSEKLEEEVQQLEQLAWDLELWLDAL) form a coiled coil.

The protein resides in the cell membrane. The chain is Small integral membrane protein 23 (SMIM23) from Homo sapiens (Human).